The following is a 146-amino-acid chain: Ribonuclease H (146 aa).

The region spanning 1-143 is the RNase H type-1 domain; that stretch reads MKKRVTIYTD…CDELARQAIK (143 aa). Mg(2+) is bound by residues aspartate 10, glutamate 48, aspartate 70, and aspartate 135.

The protein belongs to the RNase H family. Monomer. Requires Mg(2+) as cofactor.

Its subcellular location is the cytoplasm. It catalyses the reaction Endonucleolytic cleavage to 5'-phosphomonoester.. Its function is as follows. Endonuclease that specifically degrades the RNA of RNA-DNA hybrids. This Chlorobium limicola (strain DSM 245 / NBRC 103803 / 6330) protein is Ribonuclease H.